The chain runs to 251 residues: Isopentenyl-diphosphate delta-isomerase (251 aa).

Lysine 49 provides a ligand contact to substrate. Mg(2+) contacts are provided by histidine 53 and histidine 66. The 149-residue stretch at leucine 64–leucine 212 folds into the Nudix hydrolase domain. 2 residues coordinate substrate: arginine 86 and lysine 90. Cysteine 102 is an active-site residue. Residue serine 103 participates in substrate binding. 2 residues coordinate Mg(2+): glutamate 162 and glutamate 164. Residue glutamate 164 is part of the active site.

Belongs to the IPP isomerase type 1 family. Mg(2+) is required as a cofactor.

It localises to the cytoplasm. It catalyses the reaction isopentenyl diphosphate = dimethylallyl diphosphate. Its pathway is isoprenoid biosynthesis; dimethylallyl diphosphate biosynthesis; dimethylallyl diphosphate from isopentenyl diphosphate: step 1/1. Isopentenyl-diphosphate delta-isomerase; part of the second module of ergosterol biosynthesis pathway that includes the middle steps of the pathway. The second module is carried out in the vacuole and involves the formation of farnesyl diphosphate, which is also an important intermediate in the biosynthesis of ubiquinone, dolichol, heme and prenylated proteins. Activity by the mevalonate kinase first converts mevalonate into 5-phosphomevalonate. 5-phosphomevalonate is then further converted to 5-diphosphomevalonate by the phosphomevalonate kinase. The diphosphomevalonate decarboxylase then produces isopentenyl diphosphate. The isopentenyl-diphosphate delta-isomerase then catalyzes the 1,3-allylic rearrangement of the homoallylic substrate isopentenyl (IPP) to its highly electrophilic allylic isomer, dimethylallyl diphosphate (DMAPP). Finally the farnesyl diphosphate synthase catalyzes the sequential condensation of isopentenyl pyrophosphate with dimethylallyl pyrophosphate, and then with the resultant geranylpyrophosphate to the ultimate product farnesyl pyrophosphate. This chain is Isopentenyl-diphosphate delta-isomerase, found in Phaffia rhodozyma (Yeast).